The following is a 187-amino-acid chain: Elongation factor P (187 aa).

The protein belongs to the elongation factor P family.

The protein resides in the cytoplasm. It participates in protein biosynthesis; polypeptide chain elongation. Functionally, involved in peptide bond synthesis. Stimulates efficient translation and peptide-bond synthesis on native or reconstituted 70S ribosomes in vitro. Probably functions indirectly by altering the affinity of the ribosome for aminoacyl-tRNA, thus increasing their reactivity as acceptors for peptidyl transferase. In Synechococcus sp. (strain CC9605), this protein is Elongation factor P.